The sequence spans 639 residues: Methyl-accepting chemotaxis protein McpS (639 aa).

Residues 1-13 (MNSWFANISVNLK) lie on the Cytoplasmic side of the membrane. The helical transmembrane segment at 14-34 (LGLGFGLVLVLTGLLALTGWT) threads the bilayer. Residues 35-288 (SLGSLIDRSN…RDIESTQARS (254 aa)) are Periplasmic-facing. The region spanning 41-283 (DRSNWMGDIG…IQLERRDIES (243 aa)) is the HBM domain. 60-65 (RIARLQ) contacts (S)-malate. A succinate-binding site is contributed by 60–65 (RIARLQ). Residues aspartate 138, arginine 183, arginine 187, and tyrosine 236 each coordinate acetate. Positions 191–245 (AENSSANEQAALRQLDAALADTDNLKRQLPSEDARLQQFENAVLAYRDAVRQFRD) form a coiled coil. (S)-malate is bound by residues arginine 254 and threonine 258. Residue arginine 254 participates in succinate binding. The helical transmembrane segment at 289–309 (LQAIATLLALLVGVLAAVLIT) threads the bilayer. The region spanning 310–362 (RQITRPLQDTLVAVEKIASGDLTQHMRVTRRDELGVLQQGIARMGTTLRELIS) is the HAMP domain. Residues 310–639 (RQITRPLQDT…LQTLVSQFRV (330 aa)) lie on the Cytoplasmic side of the membrane. The region spanning 367 to 603 (GVTQIASAAE…EISRSILNVR (237 aa)) is the Methyl-accepting transducer domain.

The protein belongs to the methyl-accepting chemotaxis (MCP) protein family. In terms of assembly, homodimer. Exists as a mixture of monomers and dimers in solution. Ligand binding stabilizes the dimeric form. In terms of processing, methylated by CheR2.

It localises to the cell membrane. With respect to regulation, binding of citrate to the ligand-binding domain reduces the chemotaxis towards the strong attractants such as malate and succinate. However, in physiologically relevant niches, citrate is mostly complexed with magnesium or calcium ions, and does not bind McpS. Functionally, chemotactic-signal transducers respond to changes in the concentration of attractants and repellents in the environment, transduce a signal from the outside to the inside of the cell, and facilitate sensory adaptation through the variation of the level of methylation. McpS is a specific chemoreceptor for 6 tricarboxylic acid (TCA) cycle intermediates (succinate, fumarate, malate, oxaloacetate, citrate and isocitrate), butyrate and acetate. Malate, succinate, fumarate and oxaloacetate cause the strongest chemotactic response. This chain is Methyl-accepting chemotaxis protein McpS (mcpS), found in Pseudomonas putida (strain ATCC 47054 / DSM 6125 / CFBP 8728 / NCIMB 11950 / KT2440).